Consider the following 121-residue polypeptide: Small ribosomal subunit protein uS10 (121 aa).

The interval 1 to 20 (MTEQKAKSSKTSSEEAKKQK) is disordered.

The protein belongs to the universal ribosomal protein uS10 family. As to quaternary structure, part of the 30S ribosomal subunit.

In terms of biological role, involved in the binding of tRNA to the ribosomes. The chain is Small ribosomal subunit protein uS10 from Mycoplasmoides gallisepticum (strain R(low / passage 15 / clone 2)) (Mycoplasma gallisepticum).